Consider the following 179-residue polypeptide: Endoribonuclease YbeY (179 aa).

Zn(2+) is bound by residues H148, H152, and H158.

It belongs to the endoribonuclease YbeY family. It depends on Zn(2+) as a cofactor.

The protein localises to the cytoplasm. Single strand-specific metallo-endoribonuclease involved in late-stage 70S ribosome quality control and in maturation of the 3' terminus of the 16S rRNA. The sequence is that of Endoribonuclease YbeY from Prochlorococcus marinus (strain MIT 9215).